The following is a 2207-amino-acid chain: Desmoplakin-B (2207 aa).

Coiled coils occupy residues 506-916 (MEEL…EAGK), 952-1000 (AKHA…EQGR), and 1029-1063 (TERL…LLKN). The span at 905–924 (KQRQVAEEEAGKRRRTESQL) shows a compositional bias: basic and acidic residues. The disordered stretch occupies residues 905–933 (KQRQVAEEEAGKRRRTESQLEKSSQAMRE). 9 Plectin repeats span residues 1369–1406 (LLEA…DKKQ), 1407–1445 (LLIA…TLRL), 1446–1483 (LQAQ…YQAL), 1571–1609 (YLRG…TLEL), 1610–1647 (LEAQ…KDKL), 1685–1723 (LLEA…NQIL), 1783–1811 (IVDP…FLEL), 1992–2029 (LLEA…MANR), and 2068–2106 (FLEF…AQRL). The span at 2155–2164 (ISSPYNLSNP) shows a compositional bias: polar residues. A disordered region spans residues 2155-2207 (ISSPYNLSNPGSASGSRSGSRRGSVDYSLSPSSSSRYSSFSYSRTSFSSRSLS). Low complexity predominate over residues 2165–2207 (GSASGSRSGSRRGSVDYSLSPSSSSRYSSFSYSRTSFSSRSLS).

The protein belongs to the plakin or cytolinker family.

The protein localises to the cell junction. Its subcellular location is the desmosome. It localises to the cell membrane. Involved in the organization of desmosome cell-cell junctions. Of particular importance in cell adhesion in the skin and during cardiac development. May also play a role in the regulation of Wnt, TGF-beta and Hippo signaling pathways. This is Desmoplakin-B from Danio rerio (Zebrafish).